The chain runs to 525 residues: Peptide chain release factor 3 (525 aa).

Residues 9-276 form the tr-type G domain; that stretch reads AKRRTFAIIS…GFTRYAPAPQ (268 aa). GTP contacts are provided by residues 18 to 25, 86 to 90, and 140 to 143; these read SHPDAGKT, DTPGH, and NKFD.

This sequence belongs to the TRAFAC class translation factor GTPase superfamily. Classic translation factor GTPase family. PrfC subfamily.

The protein resides in the cytoplasm. Functionally, increases the formation of ribosomal termination complexes and stimulates activities of RF-1 and RF-2. It binds guanine nucleotides and has strong preference for UGA stop codons. It may interact directly with the ribosome. The stimulation of RF-1 and RF-2 is significantly reduced by GTP and GDP, but not by GMP. The chain is Peptide chain release factor 3 from Francisella tularensis subsp. novicida (strain U112).